Here is a 107-residue protein sequence, read N- to C-terminus: Flagellar transcriptional regulator FlhD (107 aa).

The protein belongs to the FlhD family. As to quaternary structure, homodimer; disulfide-linked. Forms a heterohexamer composed of two FlhC and four FlhD subunits. Each FlhC binds a FlhD dimer, forming a heterotrimer, and a hexamer assembles by dimerization of two heterotrimers.

It is found in the cytoplasm. Functions in complex with FlhC as a master transcriptional regulator that regulates transcription of several flagellar and non-flagellar operons by binding to their promoter region. Activates expression of class 2 flagellar genes, including fliA, which is a flagellum-specific sigma factor that turns on the class 3 genes. Also regulates genes whose products function in a variety of physiological pathways. This Bordetella pertussis (strain Tohama I / ATCC BAA-589 / NCTC 13251) protein is Flagellar transcriptional regulator FlhD.